Here is a 727-residue protein sequence, read N- to C-terminus: Phenylalanine ammonia-lyase str11 (727 aa).

The active-site Proton donor/acceptor is tyrosine 105. The 5-imidazolinone (Ala-Gly) cross-link spans 210–212 (ASG). The residue at position 211 (serine 211) is a 2,3-didehydroalanine (Ser). (E)-cinnamate-binding residues include asparagine 271, glutamine 361, arginine 367, asparagine 397, lysine 468, glutamate 496, and asparagine 499.

The protein belongs to the PAL/histidase family. Post-translationally, contains an active site 4-methylidene-imidazol-5-one (MIO), which is formed autocatalytically by cyclization and dehydration of residues Ala-Ser-Gly.

It carries out the reaction L-phenylalanine = (E)-cinnamate + NH4(+). The protein operates within mycotoxin biosynthesis. Functionally, phenylalanine ammonia-lyase; part of the gene cluster that mediates the biosynthesis of strobilurin A, an antifungal polyketide that contains a key beta-methoxyacrylate toxophore that targets the complex III of the mitochondrial electron transport chain. Strobilurin biosynthesis begins with construction of benzoyl CoA by step-wise elimination of ammonia from phenylalanine by the phenylalanine ammonia-lyase str11, oxygenation by str8 and retro-Claisen reaction to form benzoic acid, which is activated to its CoA thiolester benzoyl CoA by the dedicated CoA ligase str10. Benzoyl CoA forms the starter unit for the highly reducing polyketide synthase stpks1 that produces the polyketide prestrobilutin A. The FAD-dependent oxygenase str9 then catalyzes the key oxidative rearrangement responsible for the creation of the beta-methoxyacrylate toxophore. Str9 performs epoxidation of the 2,3 olefin of prestrobilutin A, followed by Meinwald rearrangement to furnish the aldehyde intermediate. Rapid enolization of the aldehyde intermediate would give the beta-methoxyacrylate skeleton and methylations catalyzed by str2 and str3 complete the synthesis and lead to the production of strobilurin A. The short-chain dehydrogenase stl2 and the dehydrogenase str4 play a role in the shunt pathway leading to the production of bolineol. The cluster encodes no obvious halogenase gene that could be involved in production of strobilurin B, nor any obvious dimethylallyl-transferase that could be involved in the production of strobilurin G. It is possible that unknown proteins encoded in, or near, the cluster (such as str1 or stl1) may form new classes of halogenases or dimethylally-transferases, or that the responsible genes are located elsewhere on the genome. Similarly, proteins encoded by str5/str6 hydrolases appear to have no chemical role in the biosynthesis of strobilurin A. Finally, no obvious self-resistance gene is found within the cluster. This Strobilurus tenacellus protein is Phenylalanine ammonia-lyase str11.